The primary structure comprises 123 residues: Holo-[acyl-carrier-protein] synthase (123 aa).

Residues Asp8 and Glu60 each coordinate Mg(2+).

Belongs to the P-Pant transferase superfamily. AcpS family. The cofactor is Mg(2+).

Its subcellular location is the cytoplasm. It carries out the reaction apo-[ACP] + CoA = holo-[ACP] + adenosine 3',5'-bisphosphate + H(+). Its function is as follows. Transfers the 4'-phosphopantetheine moiety from coenzyme A to a Ser of acyl-carrier-protein. The chain is Holo-[acyl-carrier-protein] synthase from Ehrlichia chaffeensis (strain ATCC CRL-10679 / Arkansas).